The chain runs to 158 residues: C-type lectin BML-1 (158 aa).

A signal peptide spans 1 to 23 (MGHFTFTGLCLLAMFLSLRGAEC). 4 disulfides stabilise this stretch: Cys26-Cys37, Cys54-Cys154, Cys61-Cys156, and Cys129-Cys146. The C-type lectin domain occupies 33 to 155 (KNGLCYKVFS…CAALRPFLCQ (123 aa)). Gln119, Asp121, and Glu127 together coordinate Ca(2+). Positions 119 to 121 (QPD) match the Galactose-binding motif. A glycan (N-linked (GlcNAc...) asparagine) is linked at Asn134. The Ca(2+) site is built by Asn142 and Asp143.

This sequence belongs to the true venom lectin family. Homodimer; non-covalently linked. As to expression, expressed by the venom gland.

The protein localises to the secreted. In terms of biological role, recombinant C-type lectin BML-1 is able to agglutinate erythrocytes. May be a calcium-dependent lectin. In Bungarus multicinctus (Many-banded krait), this protein is C-type lectin BML-1.